The following is a 251-amino-acid chain: Ubiquinone/menaquinone biosynthesis C-methyltransferase UbiE (251 aa).

Residues Thr-74, Asp-95, 123–124 (NA), and Ser-140 contribute to the S-adenosyl-L-methionine site.

This sequence belongs to the class I-like SAM-binding methyltransferase superfamily. MenG/UbiE family.

It carries out the reaction a 2-demethylmenaquinol + S-adenosyl-L-methionine = a menaquinol + S-adenosyl-L-homocysteine + H(+). The enzyme catalyses a 2-methoxy-6-(all-trans-polyprenyl)benzene-1,4-diol + S-adenosyl-L-methionine = a 5-methoxy-2-methyl-3-(all-trans-polyprenyl)benzene-1,4-diol + S-adenosyl-L-homocysteine + H(+). It participates in quinol/quinone metabolism; menaquinone biosynthesis; menaquinol from 1,4-dihydroxy-2-naphthoate: step 2/2. The protein operates within cofactor biosynthesis; ubiquinone biosynthesis. In terms of biological role, methyltransferase required for the conversion of demethylmenaquinol (DMKH2) to menaquinol (MKH2) and the conversion of 2-polyprenyl-6-methoxy-1,4-benzoquinol (DDMQH2) to 2-polyprenyl-3-methyl-6-methoxy-1,4-benzoquinol (DMQH2). This is Ubiquinone/menaquinone biosynthesis C-methyltransferase UbiE from Pectobacterium atrosepticum (strain SCRI 1043 / ATCC BAA-672) (Erwinia carotovora subsp. atroseptica).